We begin with the raw amino-acid sequence, 282 residues long: Large ribosomal subunit protein uL4c (282 aa).

A chloroplast-targeting transit peptide spans 1–49; the sequence is MASSATAPNSLSFFSSSLFLSSSHQIPKTYISVSKLGSGRVSKPLSVSS. The tract at residues 106–138 is disordered; sequence EVRGGGIKPYSQKKTGHARRGSQRTPLRPGGGV.

This sequence belongs to the universal ribosomal protein uL4 family. In terms of assembly, part of the 50S ribosomal subunit.

The protein localises to the plastid. The protein resides in the chloroplast. Functionally, this protein binds directly and specifically to 23S rRNA. May play a role in plastid transcriptional regulation. In Arabidopsis thaliana (Mouse-ear cress), this protein is Large ribosomal subunit protein uL4c (RPL4).